Consider the following 367-residue polypeptide: 2-aminoethylphosphonate--pyruvate transaminase (367 aa).

Lys-194 is modified (N6-(pyridoxal phosphate)lysine).

It belongs to the class-V pyridoxal-phosphate-dependent aminotransferase family. PhnW subfamily. As to quaternary structure, homodimer. It depends on pyridoxal 5'-phosphate as a cofactor.

It catalyses the reaction (2-aminoethyl)phosphonate + pyruvate = phosphonoacetaldehyde + L-alanine. Involved in phosphonate degradation. In Salmonella paratyphi B (strain ATCC BAA-1250 / SPB7), this protein is 2-aminoethylphosphonate--pyruvate transaminase.